An 89-amino-acid polypeptide reads, in one-letter code: Small ribosomal subunit protein uS15 (89 aa).

The protein belongs to the universal ribosomal protein uS15 family. In terms of assembly, part of the 30S ribosomal subunit. Forms a bridge to the 50S subunit in the 70S ribosome, contacting the 23S rRNA.

One of the primary rRNA binding proteins, it binds directly to 16S rRNA where it helps nucleate assembly of the platform of the 30S subunit by binding and bridging several RNA helices of the 16S rRNA. Its function is as follows. Forms an intersubunit bridge (bridge B4) with the 23S rRNA of the 50S subunit in the ribosome. This is Small ribosomal subunit protein uS15 from Sulfurovum sp. (strain NBC37-1).